We begin with the raw amino-acid sequence, 271 residues long: Phosphate import ATP-binding protein PstB (271 aa).

The region spanning 13 to 266 is the ABC transporter domain; the sequence is VRTAPVSEAE…PKHPYTEAYI (254 aa). 57–64 lines the ATP pocket; sequence GPSGCGKS.

This sequence belongs to the ABC transporter superfamily. Phosphate importer (TC 3.A.1.7) family. The complex is composed of two ATP-binding proteins (PstB), two transmembrane proteins (PstC and PstA) and a solute-binding protein (PstS).

It is found in the cell inner membrane. It catalyses the reaction phosphate(out) + ATP + H2O = ADP + 2 phosphate(in) + H(+). In terms of biological role, part of the ABC transporter complex PstSACB involved in phosphate import. Responsible for energy coupling to the transport system. The polypeptide is Phosphate import ATP-binding protein PstB (Thermus thermophilus (strain ATCC 27634 / DSM 579 / HB8)).